The chain runs to 346 residues: Cyclin-dependent kinase 2 (346 aa).

Residue Met1 is modified to N-acetylmethionine. Residues Phe4–Phe334 enclose the Protein kinase domain. Position 6 is an N6-acetyllysine (Lys6). Ile10–Val18 is a binding site for ATP. Thr14 carries the phosphothreonine modification. Tyr15 carries the phosphotyrosine; by WEE1 modification. Tyr19 carries the post-translational modification Phosphotyrosine. Residues Lys33, Glu81–Leu83, and Asp86 contribute to the ATP site. The Proton acceptor role is filled by Asp127. ATP-binding positions include Lys129 to Asn132 and Asp145. The Mg(2+) site is built by Asn132 and Asp145. Thr160 carries the post-translational modification Phosphothreonine; by CAK and CCRK. Phosphoserine is present on Ser218.

This sequence belongs to the protein kinase superfamily. CMGC Ser/Thr protein kinase family. CDC2/CDKX subfamily. In terms of assembly, found in a complex with CABLES1, CCNA1 and CCNE1. Interacts with CABLES1. Interacts with UHRF2. Part of a complex consisting of UHRF2, CDK2 and CCNE1. Interacts with the Speedy/Ringo proteins SPDYA and SPDYC. Interaction with SPDYA promotes kinase activation via a conformation change that alleviates obstruction of the substrate-binding cleft by the T-loop. Found in a complex with both SPDYA and CDKN1B/KIP1. Binds to RB1 and CDK7. Binding to CDKN1A (p21) leads to CDK2/cyclin E inactivation at the G1-S phase DNA damage checkpoint, thereby arresting cells at the G1-S transition during DNA repair. Associated with PTPN6 and beta-catenin/CTNNB1. Interacts with CACUL1. May interact with CEP63. Interacts with ANKRD17. Interacts with CEBPA (when phosphorylated). Forms a ternary complex with CCNA2 and CDKN1B; CDKN1B inhibits the kinase activity of CDK2 through conformational rearrangements. Interacts with cyclins A, B1, B3, D, or E. Interacts with CDK2AP2. Requires Mg(2+) as cofactor. Phosphorylated at Thr-160 by CDK7 in a CAK complex. Phosphorylation at Thr-160 promotes kinase activity, whereas phosphorylation at Tyr-15 by WEE1 reduces slightly kinase activity. Phosphorylated on Thr-14 and Tyr-15 during S and G2 phases before being dephosphorylated by CDC25A. In terms of processing, nitrosylated after treatment with nitric oxide (DETA-NO).

It localises to the cytoplasm. Its subcellular location is the cytoskeleton. The protein localises to the microtubule organizing center. It is found in the centrosome. The protein resides in the nucleus. It localises to the cajal body. Its subcellular location is the endosome. It carries out the reaction L-seryl-[protein] + ATP = O-phospho-L-seryl-[protein] + ADP + H(+). The catalysed reaction is L-threonyl-[protein] + ATP = O-phospho-L-threonyl-[protein] + ADP + H(+). Its activity is regulated as follows. Phosphorylation at Thr-14 or Tyr-15 inactivates the enzyme, while phosphorylation at Thr-160 activates it. Stimulated by MYC. Inactivated by CDKN1A (p21). Its function is as follows. Serine/threonine-protein kinase involved in the control of the cell cycle; essential for meiosis, but dispensable for mitosis. Phosphorylates CABLES1, CTNNB1, CDK2AP2, ERCC6, NBN, USP37, p53/TP53, NPM1, CDK7, RB1, BRCA2, MYC, NPAT, EZH2. Triggers duplication of centrosomes and DNA. Acts at the G1-S transition to promote the E2F transcriptional program and the initiation of DNA synthesis, and modulates G2 progression; controls the timing of entry into mitosis/meiosis by controlling the subsequent activation of cyclin B/CDK1 by phosphorylation, and coordinates the activation of cyclin B/CDK1 at the centrosome and in the nucleus. Crucial role in orchestrating a fine balance between cellular proliferation, cell death, and DNA repair in embryonic stem cells (ESCs). Activity of CDK2 is maximal during S phase and G2; activated by interaction with cyclin E during the early stages of DNA synthesis to permit G1-S transition, and subsequently activated by cyclin A2 (cyclin A1 in germ cells) during the late stages of DNA replication to drive the transition from S phase to mitosis, the G2 phase. EZH2 phosphorylation promotes H3K27me3 maintenance and epigenetic gene silencing. Cyclin E/CDK2 prevents oxidative stress-mediated Ras-induced senescence by phosphorylating MYC. Involved in G1-S phase DNA damage checkpoint that prevents cells with damaged DNA from initiating mitosis; regulates homologous recombination-dependent repair by phosphorylating BRCA2, this phosphorylation is low in S phase when recombination is active, but increases as cells progress towards mitosis. In response to DNA damage, double-strand break repair by homologous recombination a reduction of CDK2-mediated BRCA2 phosphorylation. Involved in regulation of telomere repair by mediating phosphorylation of NBN. Phosphorylation of RB1 disturbs its interaction with E2F1. NPM1 phosphorylation by cyclin E/CDK2 promotes its dissociation from unduplicated centrosomes, thus initiating centrosome duplication. Cyclin E/CDK2-mediated phosphorylation of NPAT at G1-S transition and until prophase stimulates the NPAT-mediated activation of histone gene transcription during S phase. Required for vitamin D-mediated growth inhibition by being itself inactivated. Involved in the nitric oxide- (NO) mediated signaling in a nitrosylation/activation-dependent manner. USP37 is activated by phosphorylation and thus triggers G1-S transition. CTNNB1 phosphorylation regulates insulin internalization. Phosphorylates FOXP3 and negatively regulates its transcriptional activity and protein stability. Phosphorylates ERCC6 which is essential for its chromatin remodeling activity at DNA double-strand breaks. Acts as a regulator of the phosphatidylinositol 3-kinase/protein kinase B signal transduction by mediating phosphorylation of the C-terminus of protein kinase B (PKB/AKT1 and PKB/AKT2), promoting its activation. This Mus musculus (Mouse) protein is Cyclin-dependent kinase 2 (Cdk2).